We begin with the raw amino-acid sequence, 142 residues long: Translation initiation factor 2 subunit beta (142 aa).

Belongs to the eIF-2-beta/eIF-5 family. In terms of assembly, heterotrimer composed of an alpha, a beta and a gamma chain.

Functionally, eIF-2 functions in the early steps of protein synthesis by forming a ternary complex with GTP and initiator tRNA. This Staphylothermus marinus (strain ATCC 43588 / DSM 3639 / JCM 9404 / F1) protein is Translation initiation factor 2 subunit beta.